Consider the following 96-residue polypeptide: Cytochrome c-553 (96 aa).

An N-terminal signal peptide occupies residues 1-19 (MKKVIMALGVLAFANALMA). Heme c contacts are provided by C29, C32, H33, and M73.

The protein belongs to the cytochrome c family. Binds 1 heme c group covalently per subunit.

It is found in the periplasm. Natural electron acceptor for a formate dehydrogenase. The protein is Cytochrome c-553 of Helicobacter pylori (strain ATCC 700392 / 26695) (Campylobacter pylori).